The primary structure comprises 462 residues: Probable DNA-directed RNA polymerase subunit 343L (462 aa).

Belongs to the RNA polymerase beta' chain family.

It catalyses the reaction RNA(n) + a ribonucleoside 5'-triphosphate = RNA(n+1) + diphosphate. Its function is as follows. Component of the DNA-dependent RNA polymerase that catalyzes the transcription in the cytoplasm of viral DNA into RNA using the four ribonucleoside triphosphates as substrates. This Acheta domesticus (House cricket) protein is Probable DNA-directed RNA polymerase subunit 343L.